A 123-amino-acid chain; its full sequence is Putative iron-sulfur cluster insertion protein ErpA (123 aa).

Residues Cys-51, Cys-115, and Cys-117 each contribute to the iron-sulfur cluster site.

The protein belongs to the HesB/IscA family. Homodimer. Requires iron-sulfur cluster as cofactor.

Functionally, required for insertion of 4Fe-4S clusters. This Bordetella bronchiseptica (strain ATCC BAA-588 / NCTC 13252 / RB50) (Alcaligenes bronchisepticus) protein is Putative iron-sulfur cluster insertion protein ErpA.